A 41-amino-acid chain; its full sequence is Photosystem II reaction center protein Y (41 aa).

Residues 7–25 (VAIVLAPIAVAAGWAAFNI) traverse the membrane as a helical segment.

The protein belongs to the PsbY family. In terms of assembly, PSII is composed of 1 copy each of membrane proteins PsbA, PsbB, PsbC, PsbD, PsbE, PsbF, PsbH, PsbI, PsbJ, PsbK, PsbL, PsbM, PsbT, PsbX, PsbY, PsbZ, Psb30/Ycf12, peripheral proteins PsbO, CyanoQ (PsbQ), PsbU, PsbV and a large number of cofactors. It forms dimeric complexes.

The protein resides in the cellular thylakoid membrane. In terms of biological role, loosely associated component of the core of photosystem II (PSII), it is not always seen in crystals. PSII is a light-driven water plastoquinone oxidoreductase, using light energy to abstract electrons from H(2)O, generating a proton gradient subsequently used for ATP formation. The sequence is that of Photosystem II reaction center protein Y from Nostoc sp. (strain PCC 7120 / SAG 25.82 / UTEX 2576).